The following is a 327-amino-acid chain: Undecaprenyl-phosphate 4-deoxy-4-formamido-L-arabinose transferase (327 aa).

2 helical membrane passes run 236-256 and 270-290; these read LSVF…LLVV and VFML…AMGL.

The protein belongs to the glycosyltransferase 2 family.

The protein resides in the cell inner membrane. The enzyme catalyses UDP-4-deoxy-4-formamido-beta-L-arabinose + di-trans,octa-cis-undecaprenyl phosphate = 4-deoxy-4-formamido-alpha-L-arabinopyranosyl di-trans,octa-cis-undecaprenyl phosphate + UDP. The protein operates within glycolipid biosynthesis; 4-amino-4-deoxy-alpha-L-arabinose undecaprenyl phosphate biosynthesis; 4-amino-4-deoxy-alpha-L-arabinose undecaprenyl phosphate from UDP-4-deoxy-4-formamido-beta-L-arabinose and undecaprenyl phosphate: step 1/2. Its pathway is bacterial outer membrane biogenesis; lipopolysaccharide biosynthesis. Its function is as follows. Catalyzes the transfer of 4-deoxy-4-formamido-L-arabinose from UDP to undecaprenyl phosphate. The modified arabinose is attached to lipid A and is required for resistance to polymyxin and cationic antimicrobial peptides. The polypeptide is Undecaprenyl-phosphate 4-deoxy-4-formamido-L-arabinose transferase (Enterobacter sp. (strain 638)).